A 437-amino-acid chain; its full sequence is Enolase (437 aa).

Q162 lines the (2R)-2-phosphoglycerate pocket. Residue E204 is the Proton donor of the active site. Mg(2+)-binding residues include D251, E297, and D324. (2R)-2-phosphoglycerate-binding residues include K349, R378, S379, and K400. K349 acts as the Proton acceptor in catalysis.

This sequence belongs to the enolase family. Requires Mg(2+) as cofactor.

Its subcellular location is the cytoplasm. The protein localises to the secreted. It localises to the cell surface. The enzyme catalyses (2R)-2-phosphoglycerate = phosphoenolpyruvate + H2O. It participates in carbohydrate degradation; glycolysis; pyruvate from D-glyceraldehyde 3-phosphate: step 4/5. Functionally, catalyzes the reversible conversion of 2-phosphoglycerate (2-PG) into phosphoenolpyruvate (PEP). It is essential for the degradation of carbohydrates via glycolysis. The sequence is that of Enolase from Chlorobium luteolum (strain DSM 273 / BCRC 81028 / 2530) (Pelodictyon luteolum).